Consider the following 1717-residue polypeptide: Protein MON2 homolog (1717 aa).

Serine 2 is modified (N-acetylserine). Phosphoserine is present on residues serine 205 and serine 537. The tract at residues 511–538 (ETECQTTTEEGSSPTQSTEQQDLQSTSD) is disordered. Positions 522–538 (SSPTQSTEQQDLQSTSD) are enriched in polar residues.

The protein belongs to the MON2 family. In terms of assembly, homooligomer. Heterotrimer with ATP9A and DOP1B; this interaction is retromer-independent. Interacts with SNX3.

It is found in the early endosome membrane. Plays a role in regulating membrane trafficking of cargo proteins. Together with ATP9A and DOP1B, regulates SNX3 retromer-mediated endosomal sorting of WLS away from lysosomal degradation. The protein is Protein MON2 homolog of Homo sapiens (Human).